The following is a 283-amino-acid chain: Cyclin-C (283 aa).

Residues 46–144 enclose the Cyclin N-terminal domain; sequence NVIQALGEHL…ILECEFYLLE (99 aa). The tract at residues 252–283 is disordered; sequence SILSKMPKPKPPPNSDGEQGTNGSQSSGYSQS. Residues 267–283 are compositionally biased toward polar residues; it reads DGEQGTNGSQSSGYSQS.

Belongs to the cyclin family. Cyclin C subfamily. In terms of assembly, component of the Mediator complex. The cylin/CDK pair formed by ccnc/cdk8 also associates with the large subunit of RNA polymerase II.

It is found in the nucleus. Component of the Mediator complex, a coactivator involved in regulated gene transcription of nearly all RNA polymerase II-dependent genes. Mediator functions as a bridge to convey information from gene-specific regulatory proteins to the basal RNA polymerase II transcription machinery. Mediator is recruited to promoters by direct interactions with regulatory proteins and serves as a scaffold for the assembly of a functional preinitiation complex with RNA polymerase II and the general transcription factors. Binds to and activates cyclin-dependent kinase cdk8 that phosphorylates the CTD (C-terminal domain) of the large subunit of RNA polymerase II (RNAp II), which may inhibit the formation of a transcription initiation complex. This Xenopus laevis (African clawed frog) protein is Cyclin-C (ccnc).